Reading from the N-terminus, the 109-residue chain is Prothymosin alpha (109 aa).

Residues 1–109 form a disordered region; the sequence is MSDTSVDASV…AKKQKTDDDD (109 aa). The segment covering 9 to 35 has biased composition (basic and acidic residues); sequence SVEKTTKDLKSKDKELVEETENGKDKP. Residues 41–81 are compositionally biased toward acidic residues; the sequence is ENEENGEDGADNEEEEEVDEEDEEDEGEGDDDEGDEDDEAD. Basic and acidic residues predominate over residues 99–109; it reads DAKKQKTDDDD.

The protein belongs to the pro/parathymosin family. Highly expressed in the testis.

It is found in the nucleus. Functionally, may have role in testicular activity. The sequence is that of Prothymosin alpha from Pelophylax lessonae (Pool frog).